The sequence spans 314 residues: DNA-directed RNA polymerase subunit alpha (314 aa).

The tract at residues Met-1 to Thr-228 is alpha N-terminal domain (alpha-NTD). The segment at Glu-246–Asp-314 is alpha C-terminal domain (alpha-CTD).

Belongs to the RNA polymerase alpha chain family. Homodimer. The RNAP catalytic core consists of 2 alpha, 1 beta, 1 beta' and 1 omega subunit. When a sigma factor is associated with the core the holoenzyme is formed, which can initiate transcription.

It catalyses the reaction RNA(n) + a ribonucleoside 5'-triphosphate = RNA(n+1) + diphosphate. In terms of biological role, DNA-dependent RNA polymerase catalyzes the transcription of DNA into RNA using the four ribonucleoside triphosphates as substrates. This chain is DNA-directed RNA polymerase subunit alpha, found in Bacillus cytotoxicus (strain DSM 22905 / CIP 110041 / 391-98 / NVH 391-98).